The primary structure comprises 647 residues: Macrolide export ATP-binding/permease protein MacB (647 aa).

The ABC transporter domain occupies 7–245 (IRLEDICKTF…EATLQPHEEI (239 aa)). 43–50 (GASGSGKS) is an ATP binding site. 4 helical membrane passes run 274–294 (VLTL…LAIG), 529–549 (VAAI…LVSV), 573–593 (FIIE…ILGL), and 610–630 (FGPV…FGFL).

This sequence belongs to the ABC transporter superfamily. Macrolide exporter (TC 3.A.1.122) family. Homodimer.

It is found in the cell inner membrane. Its function is as follows. Non-canonical ABC transporter that contains transmembrane domains (TMD), which form a pore in the inner membrane, and an ATP-binding domain (NBD), which is responsible for energy generation. Confers resistance against macrolides. This chain is Macrolide export ATP-binding/permease protein MacB, found in Brucella melitensis biotype 1 (strain ATCC 23456 / CCUG 17765 / NCTC 10094 / 16M).